The primary structure comprises 292 residues: G1/S-specific cyclin-D3 (292 aa).

A Cyclin N-terminal domain is found at 27–152 (VLQSLLRLEE…LVLGKLKWDL (126 aa)). Residues 255 to 292 (LREAAQTSPSPAPKAPRGSSSQGPSQTSTPTDVTAIHL) are disordered. Residues Ser264 and Ser279 each carry the phosphoserine modification. Low complexity predominate over residues 272–285 (GSSSQGPSQTSTPT). Residue Thr283 is modified to Phosphothreonine.

This sequence belongs to the cyclin family. Cyclin D subfamily. In terms of assembly, interacts with the CDK4 and CDK6 protein kinases to form a serine/threonine kinase holoenzyme complex. The cyclin subunit imparts substrate specificity to the complex. Interacts with ATF5. Interacts with EIF3K. Component of the ternary complex cyclin D/CDK4/CDKN1B required for nuclear translocation and modulation of CDK4-mediated kinase activity. Can form similar complexes with either CDKN1A or CDKN2A. In terms of processing, phosphorylation at Thr-283 by MAP kinases is required for ubiquitination and degradation by the DCX(AMBRA1) complex. Post-translationally, ubiquitinated by the DCX(AMBRA1) complex during the transition from G1 to S cell phase, leading to its degradation: ubiquitination is dependent on Thr-283 phosphorylation. The DCX(AMBRA1) complex represents the major regulator of CCND3 stability during the G1/S transition. Polyubiquitinated by the SCF(FBXL2) complex, leading to proteasomal degradation.

Its subcellular location is the nucleus. The protein localises to the cytoplasm. Regulatory component of the cyclin D3-CDK4 (DC) complex that phosphorylates and inhibits members of the retinoblastoma (RB) protein family including RB1 and regulates the cell-cycle during G(1)/S transition. Phosphorylation of RB1 allows dissociation of the transcription factor E2F from the RB/E2F complex and the subsequent transcription of E2F target genes which are responsible for the progression through the G(1) phase. Hypophosphorylates RB1 in early G(1) phase. Cyclin D-CDK4 complexes are major integrators of various mitogenenic and antimitogenic signals. Component of the ternary complex, cyclin D3/CDK4/CDKN1B, required for nuclear translocation and activity of the cyclin D-CDK4 complex. Shows transcriptional coactivator activity with ATF5 independently of CDK4. The chain is G1/S-specific cyclin-D3 (CCND3) from Bos taurus (Bovine).